A 284-amino-acid polypeptide reads, in one-letter code: Protein pxr1 (284 aa).

Residues 25–71 enclose the G-patch domain; the sequence is TNRLGFKLLSSYGWVNGNGLGEKQHGRIHNIKVSLKDDTLGIGAKAT. The disordered stretch occupies residues 149-253; it reads DEDRVCEDAS…KVKEGNRPAS (105 aa). A phosphoserine mark is found at S159 and S160. 2 stretches are compositionally biased toward basic residues: residues 166-181 and 196-206; these read EKRKKHSSKKKSKKKT and TKKKKKEHKKK. Composition is skewed to basic and acidic residues over residues 207-224 and 233-249; these read DKESSSKKRKSGSSDKEE and KDKPESTSSVEKVKEGN.

It belongs to the PINX1 family.

It is found in the nucleus. The protein localises to the nucleolus. Involved in rRNA-processing at A0, A1 and A2 sites and negatively regulates telomerase. The chain is Protein pxr1 (pxr1) from Schizosaccharomyces pombe (strain 972 / ATCC 24843) (Fission yeast).